The primary structure comprises 267 residues: Glucosamine-6-phosphate deaminase (267 aa).

The active-site Proton acceptor; for enolization step is Asp71. The active-site For ring-opening step is Asp140. Catalysis depends on His142, which acts as the Proton acceptor; for ring-opening step. The active-site For ring-opening step is the Glu147.

This sequence belongs to the glucosamine/galactosamine-6-phosphate isomerase family. In terms of assembly, homohexamer.

The protein localises to the cytoplasm. It catalyses the reaction alpha-D-glucosamine 6-phosphate + H2O = beta-D-fructose 6-phosphate + NH4(+). It participates in nucleotide-sugar biosynthesis; UDP-N-acetyl-alpha-D-glucosamine biosynthesis; alpha-D-glucosamine 6-phosphate from D-fructose 6-phosphate: step 1/1. Its function is as follows. Catalyzes the reversible conversion of alpha-D-glucosamine 6-phosphate (GlcN-6P) into beta-D-fructose 6-phosphate (Fru-6P) and ammonium ion, a regulatory reaction step in de novo uridine diphosphate-N-acetyl-alpha-D-glucosamine (UDP-GlcNAc) biosynthesis via hexosamine pathway. The sequence is that of Glucosamine-6-phosphate deaminase from Caenorhabditis elegans.